The sequence spans 650 residues: DNA gyrase subunit B (650 aa).

One can recognise a Toprim domain in the interval 429–543; it reads NELFIVEGDS…AGYVYIAQPP (115 aa). E435, D508, and D510 together coordinate Mg(2+).

It belongs to the type II topoisomerase GyrB family. As to quaternary structure, heterotetramer, composed of two GyrA and two GyrB chains. In the heterotetramer, GyrA contains the active site tyrosine that forms a transient covalent intermediate with DNA, while GyrB binds cofactors and catalyzes ATP hydrolysis. Mg(2+) serves as cofactor. Requires Mn(2+) as cofactor. Ca(2+) is required as a cofactor.

The protein localises to the cytoplasm. The enzyme catalyses ATP-dependent breakage, passage and rejoining of double-stranded DNA.. Functionally, a type II topoisomerase that negatively supercoils closed circular double-stranded (ds) DNA in an ATP-dependent manner to modulate DNA topology and maintain chromosomes in an underwound state. Negative supercoiling favors strand separation, and DNA replication, transcription, recombination and repair, all of which involve strand separation. Also able to catalyze the interconversion of other topological isomers of dsDNA rings, including catenanes and knotted rings. Type II topoisomerases break and join 2 DNA strands simultaneously in an ATP-dependent manner. The chain is DNA gyrase subunit B from Streptococcus pyogenes serotype M18 (strain MGAS8232).